Here is a 127-residue protein sequence, read N- to C-terminus: Acetylcholine receptor subunit alpha (127 aa).

Over 1–127 (ADGIFAIDQF…YFIVNVIIPC (127 aa)) the chain is Extracellular. A disulfide bridge links cysteine 33 with cysteine 47. Asparagine 46 and asparagine 94 each carry an N-linked (GlcNAc...) asparagine glycan. Cysteine 97 and cysteine 98 are disulfide-bonded.

The protein belongs to the ligand-gated ion channel (TC 1.A.9) family. Acetylcholine receptor (TC 1.A.9.1) subfamily. Alpha-1/CHRNA1 sub-subfamily. In terms of assembly, one of the alpha chains that assemble within the acetylcholine receptor, a pentamer of two alpha chains, a beta, a delta, and a gamma or epsilon chains.

The protein resides in the postsynaptic cell membrane. It is found in the cell membrane. The enzyme catalyses K(+)(in) = K(+)(out). It catalyses the reaction Na(+)(in) = Na(+)(out). Its function is as follows. Upon acetylcholine binding, the AChR responds by an extensive change in conformation that affects all subunits and leads to opening of an ion-conducting channel across the plasma membrane. Does not bind alpha-bungarotoxin. The chain is Acetylcholine receptor subunit alpha (CHRNA1) from Natrix tessellata (Dice snake).